A 1223-amino-acid chain; its full sequence is A disintegrin and metalloproteinase with thrombospondin motifs 14 (1223 aa).

A signal peptide spans 1 to 22 (MAPLRALLSYLLPLHCALCAAA). Positions 23 to 252 (GSRTPELHLS…QLGDTERKRR (230 aa)) are excised as a propeptide. Asparagine 109 carries N-linked (GlcNAc...) asparagine glycosylation. The Peptidase M12B domain maps to 259 to 460 (YSIEVLLVVD…PSYDCLLDDP (202 aa)). 3 cysteine pairs are disulfide-bonded: cysteine 336–cysteine 382, cysteine 376–cysteine 455, and cysteine 415–cysteine 441. Zn(2+) is bound at residue histidine 398. Residue glutamate 399 is part of the active site. Zn(2+) is bound by residues histidine 402 and histidine 408. The 91-residue stretch at 461-551 (FDPAWPQPPE…WKSPEQTYGQ (91 aa)) folds into the Disintegrin domain. Residue asparagine 475 is glycosylated (N-linked (GlcNAc...) asparagine). 7 disulfides stabilise this stretch: cysteine 482–cysteine 507, cysteine 493–cysteine 516, cysteine 502–cysteine 535, cysteine 529–cysteine 540, cysteine 564–cysteine 601, cysteine 568–cysteine 606, and cysteine 579–cysteine 591. Residues 552 to 607 (DGGWSSWTKFGSCSRSCGGGVRSRSRSCNNPSPAYGGRLCLGPMFEYQVCNSEECP) form the TSP type-1 1 domain. Residues 730–846 (LKLVQIPAGA…GSNNVLLEEM (117 aa)) are spacer. 3 TSP type-1 domains span residues 847–907 (DTYE…HPCS), 908–967 (QPVW…LRVP), and 968–1022 (CPAQ…PACG). Asparagine 941 carries an N-linked (GlcNAc...) asparagine glycan. Cystine bridges form between cysteine 980–cysteine 1016, cysteine 984–cysteine 1021, and cysteine 995–cysteine 1005. N-linked (GlcNAc...) asparagine glycosylation is present at asparagine 1027. Residues 1059-1097 (STEPCTGDRSVFCQMEVLDRYCSIPGYHRLCCVSCIKKA) form the PLAC domain. Residues 1100 to 1223 (PNPGPDPGPT…TSLPAASPVT (124 aa)) are disordered. The segment covering 1101–1125 (NPGPDPGPTSLPPFSTPGSPLPGPQ) has biased composition (pro residues). The span at 1199–1211 (PEDKGQPGEDLRH) shows a compositional bias: basic and acidic residues.

Post-translationally, the precursor is cleaved by a furin endopeptidase. Glycosylated. Can be O-fucosylated by POFUT2 on a serine or a threonine residue found within the consensus sequence C1-X(2)-(S/T)-C2-G of the TSP type-1 repeat domains where C1 and C2 are the first and second cysteine residue of the repeat, respectively. Fucosylated repeats can then be further glycosylated by the addition of a beta-1,3-glucose residue by the glucosyltransferase, B3GALTL. Fucosylation mediates the efficient secretion of ADAMTS family members. Can also be C-glycosylated with one or two mannose molecules on tryptophan residues within the consensus sequence W-X-X-W of the TPRs, and N-glycosylated. These other glycosylations can also facilitate secretion. In terms of tissue distribution, expressed in retina and at low levels in brain, lung and placenta. High expression in fetal tissues.

Its subcellular location is the secreted. It is found in the extracellular space. It localises to the extracellular matrix. In terms of biological role, has aminoprocollagen type I processing activity in the absence of ADAMTS2. Seems to be synthesized as a latent enzyme that requires activation to display aminoprocollagen peptidase activity. Cleaves lysyl oxidase LOX at a site downstream of its propeptide cleavage site to produce a short LOX form. The polypeptide is A disintegrin and metalloproteinase with thrombospondin motifs 14 (ADAMTS14) (Homo sapiens (Human)).